The sequence spans 527 residues: MSNFVTLIEPLELTGSRVLRIAVAFAALCGATGLLAFSWWIYKQSSSKPTLPYPVVGDTHAQSLEKNLIKGMQQYRDSPFFLAGSRPPLLILPMSVFHEIHNMPNEYISIIVEHEDKFQGKYTHITTIRPEIPATIRQDLTRNMPNIILELQDELTYASDQWPRTSKWSSVSLYDMMLRTVALLSGRAFVGLPLCRDEGWLQASIGYTVQCVSIRDQLFTWSPVLRPIIGPFLPSVRSVRRHLRFAAEIMAPLISQALQDEKQHRADTLLADQTEGRGTFISWLLRHLPEELRTPEQVGLDQMLVSFAAIHTTTMALTKVVWELVKRPEYIEPLRTEMQDVFGPDAVSPDICINKEALSRLHKLDSFIREVQRWCPSTFVTPSRRVMKSMTLSNGIKLQRGTSIAFPAHAIHMSEETPTFSPDFSSDFENPSPRIFDGFRYLNLRSIKGQGSQHQAATTGPDYLIFNHGKHACPGRFFAISEIKMILIELLAKYDFRLEDGKPGPELMRVGTETRLDTKAGLEMRRR.

The chain crosses the membrane as a helical span at residues 21-41; that stretch reads IAVAFAALCGATGLLAFSWWI. Cys473 contributes to the heme binding site.

This sequence belongs to the cytochrome P450 family. It depends on heme as a cofactor.

Its subcellular location is the membrane. Its pathway is plant hormone biosynthesis; gibberellin biosynthesis. In terms of biological role, gibberellin 13-hydroxylase; part of the gene cluster that mediates the biosynthesis of gibberellins (GAs), diterpenoids that may provide a selective advantage during infection of the preferred host plant, rice. Gibberellins (GAs) are diterpenoids and are synthesized via the mevalonate pathway. Biosynthesis of the major metabolite GA3 (gibberellic acid) from geranylgeranyl diphosphate (GGPP) requires 13 steps. The GGPP produced by the geranylgeranyl diphosphate synthase GGS2 is converted to ent-kaurene via ent-copalyldiphosphate in a two-step cyclization reaction performed by the bifunctional ent-copalyl diphosphate synthase/ent-kaurene synthase enzyme (CPS/KS). Ent-Kaurene is metabolized to GAs by a series of oxidation reactions catalyzed by cytochrome P450 monooxygenases. Cytochrome P450 monooxygenase P450-4 is an ent-kaurene oxidase that catalyzes the three oxidation steps between ent-kaurene and ent-kaurenoic acid. The highly multifunctional cytochrome P450 monooxygenase P450-1 then catalyzes four steps involving oxidation at two carbon atoms, in the main pathway from ent-kaurenoic acid to GA14 via GA12-aldehyde as well as producing kaurenolides and fujenoic acids as by-products. The cytochrome P450 monooxygenase P450-2 then converts GA14 to GA4 by removal of C-20. GA4 is further converted to GA7 by the GA4 desaturase DES via 1,2-desaturation before cytochrome P450 monooxygenase P450-3, a 13-hydroxylase, hydroxylates GA7 to GA3, the final product of the GA-biosynthetic pathway. This chain is Cytochrome P450 monooygenase 3, found in Gibberella fujikuroi (strain CBS 195.34 / IMI 58289 / NRRL A-6831) (Bakanae and foot rot disease fungus).